Here is a 322-residue protein sequence, read N- to C-terminus: HPr kinase/phosphorylase (322 aa).

Residues histidine 142 and lysine 163 contribute to the active site. 157 to 164 (GASGVGKS) is an ATP binding site. Residue serine 164 participates in Mg(2+) binding. The active-site Proton acceptor; for phosphorylation activity. Proton donor; for dephosphorylation activity is aspartate 181. The segment at 205-214 (MEIRGIGIID) is important for the catalytic mechanism of both phosphorylation and dephosphorylation. A Mg(2+)-binding site is contributed by glutamate 206. Arginine 247 is an active-site residue. The interval 268–273 (PVKVGR) is important for the catalytic mechanism of dephosphorylation.

The protein belongs to the HPrK/P family. In terms of assembly, homohexamer. Mg(2+) serves as cofactor.

It catalyses the reaction [HPr protein]-L-serine + ATP = [HPr protein]-O-phospho-L-serine + ADP + H(+). The enzyme catalyses [HPr protein]-O-phospho-L-serine + phosphate + H(+) = [HPr protein]-L-serine + diphosphate. Catalyzes the ATP- as well as the pyrophosphate-dependent phosphorylation of a specific serine residue in HPr, a phosphocarrier protein of the phosphoenolpyruvate-dependent sugar phosphotransferase system (PTS). HprK/P also catalyzes the pyrophosphate-producing, inorganic phosphate-dependent dephosphorylation (phosphorolysis) of seryl-phosphorylated HPr (P-Ser-HPr). The two antagonistic activities of HprK/P are regulated by several intracellular metabolites, which change their concentration in response to the absence or presence of rapidly metabolisable carbon sources (glucose, fructose, etc.) in the growth medium. Therefore, by controlling the phosphorylation state of HPr, HPrK/P is a sensor enzyme that plays a major role in the regulation of carbon metabolism and sugar transport: it mediates carbon catabolite repression (CCR), and regulates PTS-catalyzed carbohydrate uptake and inducer exclusion. In Lactobacillus acidophilus (strain ATCC 700396 / NCK56 / N2 / NCFM), this protein is HPr kinase/phosphorylase.